Reading from the N-terminus, the 99-residue chain is NADH-quinone oxidoreductase subunit K (99 aa).

3 helical membrane-spanning segments follow: residues 3-23, 28-48, and 59-79; these read PANY…GVLV, IVVF…LVTF, and IMAF…LAII.

It belongs to the complex I subunit 4L family. NDH-1 is composed of 14 different subunits. Subunits NuoA, H, J, K, L, M, N constitute the membrane sector of the complex.

It is found in the cell membrane. It carries out the reaction a quinone + NADH + 5 H(+)(in) = a quinol + NAD(+) + 4 H(+)(out). Functionally, NDH-1 shuttles electrons from NADH, via FMN and iron-sulfur (Fe-S) centers, to quinones in the respiratory chain. The immediate electron acceptor for the enzyme in this species is believed to be a menaquinone. Couples the redox reaction to proton translocation (for every two electrons transferred, four hydrogen ions are translocated across the cytoplasmic membrane), and thus conserves the redox energy in a proton gradient. In Frankia casuarinae (strain DSM 45818 / CECT 9043 / HFP020203 / CcI3), this protein is NADH-quinone oxidoreductase subunit K.